A 348-amino-acid chain; its full sequence is Phosphatidylglycerophosphate phosphatase 1, chloroplastic/mitochondrial (348 aa).

The transit peptide at 1–58 (MQTPSMAASTTSYYPIPKSFLLSPPRHKRNPNLISCSTKPICSPPPPSSSSSSPLQTT) directs the protein to the chloroplast and mitochondrion. Residues 17-67 (PKSFLLSPPRHKRNPNLISCSTKPICSPPPPSSSSSSPLQTTTTHRSQKQN) are disordered. Residues 55–67 (LQTTTTHRSQKQN) show a composition bias toward polar residues. Positions 184–188 (DKDNT) match the Phosphoryl acceptor motif.

It belongs to the HAD-like hydrolase superfamily. Mg(2+) serves as cofactor. In terms of tissue distribution, mainly expressed in inflorescences (especially in pollen) and, to a lower extent, in leaves, stems and siliques, as well as, at low levels, in roots. Mostly expressed in hypocotyl, vasculatures, trichomes, guard cells and stigmas.

Its subcellular location is the plastid. The protein resides in the chloroplast. It localises to the mitochondrion. It catalyses the reaction a 1,2-diacyl-sn-glycero-3-phospho-(1'-sn-glycero-3'-phosphate) + H2O = a 1,2-diacyl-sn-glycero-3-phospho-(1'-sn-glycerol) + phosphate. The protein operates within phospholipid metabolism; phosphatidylglycerol biosynthesis; phosphatidylglycerol from CDP-diacylglycerol: step 2/2. Its function is as follows. Phosphatidylglycerophosphate (PGP) phosphatase involved in the biosynthesis of phosphatidylglycerol (PG), a phosphoglycerolipid predominantly present in chloroplastic thylakoid membranes and which has important photosynthetic function; seems to use PGP 34:3, PGP 34:2 and PGP 34:1 as substrates. Required for thylakoid membranes development and chloroplast function. Necessary for normal cell growth. Required for root growth and columella cells organization. This chain is Phosphatidylglycerophosphate phosphatase 1, chloroplastic/mitochondrial, found in Arabidopsis thaliana (Mouse-ear cress).